Reading from the N-terminus, the 339-residue chain is Phosphate acyltransferase (339 aa).

The protein belongs to the PlsX family. In terms of assembly, homodimer. Probably interacts with PlsY.

It is found in the cytoplasm. It catalyses the reaction a fatty acyl-[ACP] + phosphate = an acyl phosphate + holo-[ACP]. The protein operates within lipid metabolism; phospholipid metabolism. In terms of biological role, catalyzes the reversible formation of acyl-phosphate (acyl-PO(4)) from acyl-[acyl-carrier-protein] (acyl-ACP). This enzyme utilizes acyl-ACP as fatty acyl donor, but not acyl-CoA. This Methylococcus capsulatus (strain ATCC 33009 / NCIMB 11132 / Bath) protein is Phosphate acyltransferase.